A 173-amino-acid polypeptide reads, in one-letter code: Eggshell protein (173 aa).

Residues 1–18 (MKQSLTLVFLVAIGYATA) form the signal peptide. Residues 145–162 (GSGKGKGGGKGGKGGKGG) show a composition bias toward gly residues. The tract at residues 145 to 173 (GSGKGKGGGKGGKGGKGGTYKPSHYGGGY) is disordered.

This chain is Eggshell protein, found in Schistosoma mansoni (Blood fluke).